Here is a 500-residue protein sequence, read N- to C-terminus: Cysteine-rich secretory protein LCCL domain-containing 1 (500 aa).

The N-terminal stretch at 1 to 23 (MKCTAREWLRVTTVLFMARAIPA) is a signal peptide. Residues 66–206 (LDLHNKLRSQ…PKAVYLVCNY (141 aa)) enclose the SCP domain. Residues 254-280 (EETNEIERQQSQVHDTHVRTRSDDSSR) are compositionally biased toward basic and acidic residues. Residues 254 to 281 (EETNEIERQQSQVHDTHVRTRSDDSSRN) are disordered. LCCL domains follow at residues 289–384 (MSQI…ANSF) and 390–492 (TVQA…PGGK). 4 disulfide bridges follow: Cys295–Cys313, Cys317–Cys337, Cys396–Cys418, and Cys422–Cys445.

The protein belongs to the CRISP family.

The protein localises to the secreted. The polypeptide is Cysteine-rich secretory protein LCCL domain-containing 1 (CRISPLD1) (Homo sapiens (Human)).